Reading from the N-terminus, the 199-residue chain is MAHSQLLSSEERLFCYRWFHSLLAKELSEPQLQALQAGQFASFFAFLAELGFQPQVTDLQNELAKLTAYDSPRLELAADFAQCFLLEGKLSALPYASYYLDERDLSENLAVMDQWLTKFQLKINRLHNEPSDHLCIYLEVLIKLIETEQPVQVQQQFIRQQLLGWLPQWAEKTAQIHSSTAFYQIISNLLLGFLQQDIT.

The protein belongs to the TorD/DmsD family. TorD subfamily.

It localises to the cytoplasm. Functionally, involved in the biogenesis of TorA. Acts on TorA before the insertion of the molybdenum cofactor and, as a result, probably favors a conformation of the apoenzyme that is competent for acquiring the cofactor. This is Chaperone protein TorD from Actinobacillus pleuropneumoniae serotype 3 (strain JL03).